Here is a 122-residue protein sequence, read N- to C-terminus: Probable glycine cleavage system H protein (122 aa).

The Lipoyl-binding domain maps to 23-104 (IATVGITDYA…PYGNWLVKMK (82 aa)). K64 is modified (N6-lipoyllysine).

It belongs to the GcvH family. In terms of assembly, the glycine cleavage system is composed of four proteins: P, T, L and H. (R)-lipoate serves as cofactor.

In terms of biological role, the glycine cleavage system catalyzes the degradation of glycine. The H protein shuttles the methylamine group of glycine from the P protein to the T protein. The chain is Probable glycine cleavage system H protein from Thermoplasma volcanium (strain ATCC 51530 / DSM 4299 / JCM 9571 / NBRC 15438 / GSS1).